We begin with the raw amino-acid sequence, 623 residues long: Sterol O-acyltransferase 1 (623 aa).

The segment at 20-99 is disordered; the sequence is NSAEPSKRHS…EQAEEKYPVD (80 aa). Positions 57–72 are enriched in low complexity; the sequence is ATTTATGVAVAAAAAA. Over residues 83–92 the composition is skewed to acidic residues; it reads DGDDEQDEQA. A run of 5 helical transmembrane segments spans residues 195–215, 242–262, 277–297, 384–404, and 422–442; these read LESNFSGIYVFAWMFMGWIAF, LFTIALLDLALFLSTFFVVFV, GFVAVSLFELCFIPVSFPVYV, ISCSNYFMFCMFPVLVYQINY, and IMGTIFLMMVTAQIFMHPVAM. The FYXDWWN motif signature appears at 504 to 510; the sequence is FYGDWWN. Transmembrane regions (helical) follow at residues 548 to 568 and 603 to 623; these read ATLFTFLLSAVFHEIAMFAIF and VVFTFGVCTGPSMIMTLYLTL. His560 is a catalytic residue.

The protein belongs to the membrane-bound acyltransferase family. Sterol o-acyltransferase subfamily.

It is found in the endoplasmic reticulum membrane. Sterol O-acyltransferase that catalyzes the formation of stery esters. This Saccharomyces uvarum (strain ATCC 76518 / CBS 7001 / CLIB 283 / NBRC 10550 / MCYC 623 / NCYC 2669 / NRRL Y-11845) (Yeast) protein is Sterol O-acyltransferase 1 (ARE1).